A 105-amino-acid polypeptide reads, in one-letter code: U7-hexatoxin-Hi1a (105 aa).

A signal peptide spans 1–23; the sequence is MKTILLFLGVCAVGASMMTGGWT.

The protein belongs to the cystatin family. In terms of processing, contains 2 disulfide bonds. As to expression, expressed by the venom gland.

Its subcellular location is the secreted. Functionally, inhibits various C1 cysteine proteases. This protein has no toxic activity and its function in the venom is unknown. It may play a role as a housekeeping or regulatory protein. The protein is U7-hexatoxin-Hi1a of Hadronyche infensa (Fraser island funnel-web spider).